Here is a 38-residue protein sequence, read N- to C-terminus: Photosystem II reaction center protein L (38 aa).

The helical transmembrane segment at 17 to 37 (SLYWGLLLIFVLAVLFSNYFF) threads the bilayer.

Belongs to the PsbL family. In terms of assembly, PSII is composed of 1 copy each of membrane proteins PsbA, PsbB, PsbC, PsbD, PsbE, PsbF, PsbH, PsbI, PsbJ, PsbK, PsbL, PsbM, PsbT, PsbX, PsbY, PsbZ, Psb30/Ycf12, at least 3 peripheral proteins of the oxygen-evolving complex and a large number of cofactors. It forms dimeric complexes.

It is found in the plastid. It localises to the chloroplast thylakoid membrane. Its function is as follows. One of the components of the core complex of photosystem II (PSII). PSII is a light-driven water:plastoquinone oxidoreductase that uses light energy to abstract electrons from H(2)O, generating O(2) and a proton gradient subsequently used for ATP formation. It consists of a core antenna complex that captures photons, and an electron transfer chain that converts photonic excitation into a charge separation. This subunit is found at the monomer-monomer interface and is required for correct PSII assembly and/or dimerization. The chain is Photosystem II reaction center protein L from Huperzia lucidula (Shining clubmoss).